The primary structure comprises 163 residues: Urease accessory protein UreE (163 aa).

Residues 144–163 form a disordered region; that stretch reads QPEPGAYGGSSAGSHDGHHH.

Belongs to the UreE family.

The protein localises to the cytoplasm. Its function is as follows. Involved in urease metallocenter assembly. Binds nickel. Probably functions as a nickel donor during metallocenter assembly. The protein is Urease accessory protein UreE of Aliivibrio fischeri (strain MJ11) (Vibrio fischeri).